A 268-amino-acid chain; its full sequence is Undecaprenyl-diphosphatase (268 aa).

Helical transmembrane passes span 11 to 33 (FLGL…LLLI), 46 to 66 (FEVL…SAKL), 84 to 104 (LGVL…HGFI), 107 to 127 (VLFE…FILL), 144 to 164 (YPLP…IPGV), 185 to 205 (AEFS…YDLF), 213 to 233 (FNDG…GVFV), and 246 to 266 (FALF…ALII).

Belongs to the UppP family.

It is found in the cell inner membrane. It carries out the reaction di-trans,octa-cis-undecaprenyl diphosphate + H2O = di-trans,octa-cis-undecaprenyl phosphate + phosphate + H(+). Catalyzes the dephosphorylation of undecaprenyl diphosphate (UPP). Confers resistance to bacitracin. This chain is Undecaprenyl-diphosphatase, found in Brucella suis (strain ATCC 23445 / NCTC 10510).